Here is a 145-residue protein sequence, read N- to C-terminus: Superoxide dismutase [Mn/Fe] (145 aa).

2 residues coordinate Fe(3+): histidine 10 and histidine 64. Mn(2+)-binding residues include histidine 10 and histidine 64.

This sequence belongs to the iron/manganese superoxide dismutase family. Requires Mn(2+) as cofactor. It depends on Fe(3+) as a cofactor.

The catalysed reaction is 2 superoxide + 2 H(+) = H2O2 + O2. Destroys superoxide anion radicals which are normally produced within the cells and which are toxic to biological systems. Catalyzes the dismutation of superoxide anion radicals into O2 and H2O2 by successive reduction and oxidation of the transition metal ion at the active site. This Streptococcus alactolyticus protein is Superoxide dismutase [Mn/Fe] (sodA).